A 1043-amino-acid polypeptide reads, in one-letter code: Protein SLOW WALKER 2 (1043 aa).

Disordered regions lie at residues 32–113, 444–469, 632–737, and 861–1043; these read SALP…SIDD, QGAD…VSTD, DIEH…GGYD, and SKKK…KASE. A Nuclear localization signal 1 motif is present at residues 44–51; the sequence is FRKPAKSK. The segment covering 47–59 has biased composition (basic residues); the sequence is PAKSKTQKRKKPK. Composition is skewed to basic and acidic residues over residues 80-95 and 444-466; these read EKGK…KDAP and QGAD…KQEV. The Nuclear localization signal 2 motif lies at 441-448; sequence NRKQGADD. Positions 632 to 645 are enriched in acidic residues; it reads DIEHFEDVIEGDDV. The segment covering 646-673 has biased composition (basic and acidic residues); it reads DPNKKAENDENVVEVDHDGVEKSSRDGD. Acidic residues-rich tracts occupy residues 688–699 and 872–983; these read DEEDDNASDDSE and EEAA…DSDG. Basic residues predominate over residues 988–1000; it reads SKKKKKEKRKRKS. The segment covering 1006–1031 has biased composition (basic and acidic residues); that stretch reads EEYKHLIDQDEKEDSKTKRKATSEPT. A Nuclear localization signal 3 motif is present at residues 1022–1029; the sequence is TKRKATSE. A compositionally biased stretch (basic residues) spans 1032 to 1043; sequence KKKKKKKSKASE.

This sequence belongs to the CBF/MAK21 family. Interacts with RBL in both the nucleolus and nucleoplasm. Binds to NOC2. As to expression, mainly expressed in actively dividing tissues (e.g. root tips, lateral root primordia, shoot apices, young leaves, inflorescences and pollen grains) through the plant, including roots, stems, leaves, inflorescences, siliques and seedlings, and in gametophytes.

It localises to the nucleus. It is found in the nucleolus. Its function is as follows. Together with NOC2, probably involved in pre-ribosome export from the nucleus to the cytoplasm. Required for coordinated cell cycle progression during female gametophyte and pollen development. The sequence is that of Protein SLOW WALKER 2 from Arabidopsis thaliana (Mouse-ear cress).